The following is a 365-amino-acid chain: Coxsackievirus and adenovirus receptor (365 aa).

The signal sequence occupies residues 1–19 (MALLLCFVLLCGVVDFARS). 2 Ig-like C2-type domains span residues 20–134 (LSIT…KKIH) and 141–228 (PSGA…LRLN). Topologically, residues 20 to 237 (LSITTPEEMI…NVVPPSNKAG (218 aa)) are extracellular. 2 cysteine pairs are disulfide-bonded: Cys-41–Cys-120 and Cys-162–Cys-212. Residues Asn-106 and Asn-201 are each glycosylated (N-linked (GlcNAc...) asparagine). The helical transmembrane segment at 238–258 (LIAGAIIGTLLALALIGLIIF) threads the bilayer. Residues Cys-259 and Cys-260 are each lipidated (S-palmitoyl cysteine). At 259 to 365 (CCRKKRREEK…PAQSKDGSIV (107 aa)) the chain is on the cytoplasmic side. Basic and acidic residues predominate over residues 269-282 (YEKEVHHDIREDVP). Positions 269–343 (YEKEVHHDIR…TLPPAKVAAP (75 aa)) are disordered. A compositionally biased stretch (polar residues) spans 286–322 (SRTSTARSYIGSNHSSLGSMSPSNMEGYSKTQYNQVP). 6 positions are modified to phosphoserine: Ser-297, Ser-304, Ser-306, Ser-323, Ser-332, and Ser-363. A PDZ-binding motif is present at residues 360-365 (KDGSIV).

In terms of assembly, monomer. May form homodimer. Interacts with LNX, MAGI1, DLG4, PRKCABP, TJP1 and CTNNB1. Interacts with MPDZ; recruits MPDZ to intercellular contact sites. Interacts with JAML (homodimeric form). Secreted isoform 3, isoform 4 and isoform 5 can interact with the extracellular domain of the receptor. (Microbial infection) Interacts with adenovirus subgroups A, C, D, E and F fiber proteins as well as coxsackievirus B1, B2, B3, B4, B5 and B6 capsid proteins. In terms of processing, N-glycosylated. Palmitoylated on Cys-259 and/or Cys-260; required for proper localization to the plasma membrane. As to expression, expressed in pancreas, brain, heart, small intestine, testis, prostate and at a lower level in liver and lung. Isoform 5 is ubiquitously expressed. Isoform 3 is expressed in heart, lung and pancreas. In skeletal muscle, isoform 1 is found at the neuromuscular junction and isoform 2 is found in blood vessels. In cardiac muscle, isoform 1 and isoform 2 are found at intercalated disks. In heart expressed in subendothelial layers of the vessel wall but not in the luminal endothelial surface. Expression is elevated in hearts with dilated cardiomyopathy.

The protein localises to the cell membrane. The protein resides in the basolateral cell membrane. It is found in the cell junction. Its subcellular location is the tight junction. It localises to the adherens junction. The protein localises to the secreted. In terms of biological role, component of the epithelial apical junction complex that may function as a homophilic cell adhesion molecule and is essential for tight junction integrity. Also involved in transepithelial migration of leukocytes through adhesive interactions with JAML a transmembrane protein of the plasma membrane of leukocytes. The interaction between both receptors also mediates the activation of gamma-delta T-cells, a subpopulation of T-cells residing in epithelia and involved in tissue homeostasis and repair. Upon epithelial CXADR-binding, JAML induces downstream cell signaling events in gamma-delta T-cells through PI3-kinase and MAP kinases. It results in proliferation and production of cytokines and growth factors by T-cells that in turn stimulate epithelial tissues repair. Its function is as follows. (Microbial infection) Acts as a receptor for adenovirus type C. Functionally, (Microbial infection) Acts as a receptor for Coxsackievirus B1 to B6. The sequence is that of Coxsackievirus and adenovirus receptor (CXADR) from Homo sapiens (Human).